The following is a 217-amino-acid chain: Small ribosomal subunit protein uS3 (217 aa).

The KH type-2 domain maps to 38-106 (IRKFIDNELK…KVHINVIEIK (69 aa)).

The protein belongs to the universal ribosomal protein uS3 family. As to quaternary structure, part of the 30S ribosomal subunit. Forms a tight complex with proteins S10 and S14.

In terms of biological role, binds the lower part of the 30S subunit head. Binds mRNA in the 70S ribosome, positioning it for translation. This chain is Small ribosomal subunit protein uS3, found in Staphylococcus epidermidis (strain ATCC 35984 / DSM 28319 / BCRC 17069 / CCUG 31568 / BM 3577 / RP62A).